We begin with the raw amino-acid sequence, 353 residues long: MAMFPPVEDSVLQNNPDFVNLYNKLTNVVLNSDCSTQNGPRAKERASVRQELDRRRLISAKQHLLTCAISSATPSSTPPATRASSRLQPPKGHQAGGSNSQQQQPSLPEPLLDLLIVLPPLLDANNPPLPQDTLQLLFAHPPLSELETLLPALAPIIASNLRTWALGLARIAHPSTNASFLHRHIASLPTTLSGWRSDLAAAETELSSHRLRSLAALTSLLQAATNALSLLIRALEVKHGKVARSLELRAAEASLHARRYDADAVIAAASVRRAFYTPEAITALRNYGAHLRDAKMRSEERVRGLAAELGEYGVGVDGGENKEKKMREMSRVYREMTRQMDDTRRDLDRLNQG.

Residues 69–106 are disordered; sequence ISSATPSSTPPATRASSRLQPPKGHQAGGSNSQQQQPS. The span at 70–86 shows a compositional bias: low complexity; sequence SSATPSSTPPATRASSR. A coiled-coil region spans residues 319-353; sequence GENKEKKMREMSRVYREMTRQMDDTRRDLDRLNQG.

This is an uncharacterized protein from Gibberella zeae (strain ATCC MYA-4620 / CBS 123657 / FGSC 9075 / NRRL 31084 / PH-1) (Wheat head blight fungus).